The sequence spans 972 residues: MTAEIDPPAYTLVFNPATNSTPNTVAEFQKALEKGSDETKIEAMKEILVTMLEGNPLPEMLMHIIRFVMPSKNKKLKKLLYFYWEIVPKLDQDGKLRHEMILVCNAIQHDLQHPNEFIRGNTLRFLTKLREPELLEQMVPSTLACLEYRHAYVRKYAILAVLSIYKVSEHLLPDAKEIINTFLLAETDPICKRNAFLGLSELDRDNALQYLQDNIDDIESLDPLLQAAFVQFIRKDAIQTPALKSQYCDLLLELLASATADEVVFETALALTILSGNQTVLIKAVSKMIDLAVKVSDNNVKIIVLDRIQDINERNPGCLEELTLDILRVLNAEDIDVRSKALTIAMDLVTSRNIEDVVQLLKKELQTTVINNEKEKSSDYRSLLIKTIRGIAVRFEEIAANIVSLLLDFITDLNSVAANGVIAFVKDVVELYPQLRSNILENLIAKLESVNSAKAYRGALWILGEYSTTESEIQDSWKHIRQSIGEIPILQTELKNQRKSQDEDDEATEESATKQAGPVILPDGTYATENAFGSSNNDNKKKLVENENRPPLRRFVLGGDFYTASILASTIVKLVLRFEKVSERAAVLNALKAEGLLMLVSIIRVGESSIVEKNIDEDSQERITTAIAILMDESNPDESSAERELLNIAFLDATKASFKGQFVAQKKTKLFKSSPVRKHKEAIDQSVSFRLLQENDNTAVSGDAIDEDLQLAIRGDAARDTSSIAISKLKKIVPLTGFSDPVYAEACITTNQFDVVLDVLLVNQTKETLKNFHVQFATLGDLKIVENPPATNVVPHGFHRVSVTVKVSSADTGVIFGNIIYDGGHGQDARYVILNDVHVDLMDYIKPAKTDDESFRTMWNAFEWENKISVKSKLPSLHAYLDELIKGTNMGVLTPVESLGEKDCRFLCCNLYARSSFGEDALANLCIELDPNTEQVVGYVRIRSKGQGLALSLGDRVALIAKQNNKVIVGHV.

HEAT repeat units lie at residues 79-113 (LLYF…DLQH), 133-170 (ELLE…VSEH), 317-354 (GCLE…SRNI), 397-434 (EIAA…LYPQ), and 481-518 (RQSI…QAGP). The tract at residues 494–522 (LKNQRKSQDEDDEATEESATKQAGPVILP) is disordered.

As to quaternary structure, oligomeric complex that consists of at least the alpha, beta, beta', gamma, delta, epsilon and zeta subunits.

Its subcellular location is the cytoplasm. The protein localises to the golgi apparatus membrane. It is found in the cytoplasmic vesicle. It localises to the COPI-coated vesicle membrane. Its function is as follows. The coatomer is a cytosolic protein complex that binds to dilysine motifs and reversibly associates with Golgi non-clathrin-coated vesicles, which further mediate biosynthetic protein transport from the ER, via the Golgi up to the trans Golgi network. Coatomer complex is required for budding from Golgi membranes, and is essential for the retrograde Golgi-to-ER transport of dilysine-tagged proteins. The chain is Coatomer subunit beta from Candida glabrata (strain ATCC 2001 / BCRC 20586 / JCM 3761 / NBRC 0622 / NRRL Y-65 / CBS 138) (Yeast).